A 298-amino-acid polypeptide reads, in one-letter code: Acetylglutamate kinase (298 aa).

Residues 69–70 (GG), R91, and N191 each bind substrate.

It belongs to the acetylglutamate kinase family. ArgB subfamily.

Its subcellular location is the cytoplasm. It carries out the reaction N-acetyl-L-glutamate + ATP = N-acetyl-L-glutamyl 5-phosphate + ADP. It functions in the pathway amino-acid biosynthesis; L-arginine biosynthesis; N(2)-acetyl-L-ornithine from L-glutamate: step 2/4. Functionally, catalyzes the ATP-dependent phosphorylation of N-acetyl-L-glutamate. The polypeptide is Acetylglutamate kinase (Neisseria meningitidis serogroup C (strain 053442)).